We begin with the raw amino-acid sequence, 243 residues long: Probable 2-phosphosulfolactate phosphatase (243 aa).

Belongs to the ComB family. Requires Mg(2+) as cofactor.

The catalysed reaction is (2R)-O-phospho-3-sulfolactate + H2O = (2R)-3-sulfolactate + phosphate. The protein is Probable 2-phosphosulfolactate phosphatase of Prochlorococcus marinus (strain MIT 9303).